Consider the following 350-residue polypeptide: tRNA uridine(34) hydroxylase (350 aa).

The Rhodanese domain occupies 146–240 (DDPDAVFIDM…YARRARAQGL (95 aa)). Catalysis depends on Cys200, which acts as the Cysteine persulfide intermediate. Basic and acidic residues predominate over residues 319–328 (RRRRAGRENG). Residues 319–350 (RRRRAGRENGNKIFNKSRGRLNSKLSIPDPAE) form a disordered region.

This sequence belongs to the TrhO family.

It catalyses the reaction uridine(34) in tRNA + AH2 + O2 = 5-hydroxyuridine(34) in tRNA + A + H2O. Functionally, catalyzes oxygen-dependent 5-hydroxyuridine (ho5U) modification at position 34 in tRNAs. This chain is tRNA uridine(34) hydroxylase, found in Salmonella paratyphi B (strain ATCC BAA-1250 / SPB7).